The primary structure comprises 313 residues: tRNA dimethylallyltransferase (313 aa).

11–18 (GPTASGKT) is a binding site for ATP. Residue 13–18 (TASGKT) participates in substrate binding. 3 interaction with substrate tRNA regions span residues 36 to 39 (DSAL), 160 to 164 (QRINR), and 241 to 246 (RCVGYR).

It belongs to the IPP transferase family. As to quaternary structure, monomer. Mg(2+) serves as cofactor.

It carries out the reaction adenosine(37) in tRNA + dimethylallyl diphosphate = N(6)-dimethylallyladenosine(37) in tRNA + diphosphate. Functionally, catalyzes the transfer of a dimethylallyl group onto the adenine at position 37 in tRNAs that read codons beginning with uridine, leading to the formation of N6-(dimethylallyl)adenosine (i(6)A). The protein is tRNA dimethylallyltransferase of Haemophilus ducreyi (strain 35000HP / ATCC 700724).